Here is a 512-residue protein sequence, read N- to C-terminus: NAD(P) transhydrogenase subunit alpha (512 aa).

At 1 to 400 the chain is on the cytoplasmic side; that stretch reads MLIGVPRELL…KESKPTDPRV (400 aa). NAD(+) contacts are provided by residues 125–128, Val-175, 195–197, and Gly-225; these read QALD and DSR. The disordered stretch occupies residues 375–394; it reads SAQPKQETKAAPVAEKKESK. The next 2 membrane-spanning stretches (helical) occupy residues 401-421 and 422-442; these read KYGV…VAPA and AFLS…YVVW. The Cytoplasmic segment spans residues 443-451; sequence NVSHALHTP. The helical transmembrane segment at 452-472 threads the bilayer; that stretch reads LMAVTNAISGIIIVGALLQIR. The Periplasmic segment spans residues 473–478; sequence QPTGNL. The helical transmembrane segment at 479–499 threads the bilayer; it reads FIDALAFVAILVASINIFGGF. Over 500 to 512 the chain is Cytoplasmic; the sequence is RVTQRMLAMFRKG.

This sequence belongs to the AlaDH/PNT family. As to quaternary structure, heterodimer of an alpha (PntA) and a beta (PntB) chain.

Its subcellular location is the cell inner membrane. The catalysed reaction is NAD(+) + NADPH + H(+)(in) = NADH + NADP(+) + H(+)(out). Functionally, the transhydrogenation between NADH and NADP is coupled to respiration and ATP hydrolysis and functions as a proton pump across the membrane. The polypeptide is NAD(P) transhydrogenase subunit alpha (pntA) (Haemophilus influenzae (strain ATCC 51907 / DSM 11121 / KW20 / Rd)).